A 170-amino-acid chain; its full sequence is Adenine phosphoribosyltransferase (170 aa).

The protein belongs to the purine/pyrimidine phosphoribosyltransferase family. As to quaternary structure, homodimer.

The protein resides in the cytoplasm. The catalysed reaction is AMP + diphosphate = 5-phospho-alpha-D-ribose 1-diphosphate + adenine. It participates in purine metabolism; AMP biosynthesis via salvage pathway; AMP from adenine: step 1/1. Functionally, catalyzes a salvage reaction resulting in the formation of AMP, that is energically less costly than de novo synthesis. The protein is Adenine phosphoribosyltransferase of Geobacillus sp. (strain WCH70).